The primary structure comprises 161 residues: Phosphopantetheine adenylyltransferase (161 aa).

Position 9 (Thr9) interacts with substrate. Residues 9 to 10 (TF) and His17 each bind ATP. Substrate is bound by residues Lys41, Leu73, and Arg87. ATP contacts are provided by residues 88–90 (GLR), Glu98, and 123–129 (YQFISGT).

Belongs to the bacterial CoaD family. As to quaternary structure, homohexamer. Requires Mg(2+) as cofactor.

It localises to the cytoplasm. It carries out the reaction (R)-4'-phosphopantetheine + ATP + H(+) = 3'-dephospho-CoA + diphosphate. It participates in cofactor biosynthesis; coenzyme A biosynthesis; CoA from (R)-pantothenate: step 4/5. Reversibly transfers an adenylyl group from ATP to 4'-phosphopantetheine, yielding dephospho-CoA (dPCoA) and pyrophosphate. This chain is Phosphopantetheine adenylyltransferase, found in Cupriavidus pinatubonensis (strain JMP 134 / LMG 1197) (Cupriavidus necator (strain JMP 134)).